We begin with the raw amino-acid sequence, 332 residues long: DNA-directed RNA polymerase subunit alpha (332 aa).

The segment at 1 to 231 is alpha N-terminal domain (alpha-NTD); sequence MVREKVTVST…DLFIPFLHME (231 aa). The tract at residues 262–332 is alpha C-terminal domain (alpha-CTD); that stretch reads LSLESLFIDQ…FALDLPKNLN (71 aa).

It belongs to the RNA polymerase alpha chain family. As to quaternary structure, in plastids the minimal PEP RNA polymerase catalytic core is composed of four subunits: alpha, beta, beta', and beta''. When a (nuclear-encoded) sigma factor is associated with the core the holoenzyme is formed, which can initiate transcription.

It localises to the plastid. It catalyses the reaction RNA(n) + a ribonucleoside 5'-triphosphate = RNA(n+1) + diphosphate. Its function is as follows. DNA-dependent RNA polymerase catalyzes the transcription of DNA into RNA using the four ribonucleoside triphosphates as substrates. This chain is DNA-directed RNA polymerase subunit alpha, found in Cuscuta japonica (Japanese dodder).